A 390-amino-acid polypeptide reads, in one-letter code: Succinate--CoA ligase [ADP-forming] subunit beta (390 aa).

One can recognise an ATP-grasp domain in the interval 9 to 245 (KHLLKKYNIP…TTQEDEHETM (237 aa)). ATP is bound by residues K46, 53–55 (GRG), E99, S102, and E107. Mg(2+)-binding residues include N200 and D214. Substrate-binding positions include N265 and 322–324 (GIV).

It belongs to the succinate/malate CoA ligase beta subunit family. As to quaternary structure, heterotetramer of two alpha and two beta subunits. Requires Mg(2+) as cofactor.

It carries out the reaction succinate + ATP + CoA = succinyl-CoA + ADP + phosphate. The catalysed reaction is GTP + succinate + CoA = succinyl-CoA + GDP + phosphate. The protein operates within carbohydrate metabolism; tricarboxylic acid cycle; succinate from succinyl-CoA (ligase route): step 1/1. Succinyl-CoA synthetase functions in the citric acid cycle (TCA), coupling the hydrolysis of succinyl-CoA to the synthesis of either ATP or GTP and thus represents the only step of substrate-level phosphorylation in the TCA. The beta subunit provides nucleotide specificity of the enzyme and binds the substrate succinate, while the binding sites for coenzyme A and phosphate are found in the alpha subunit. The chain is Succinate--CoA ligase [ADP-forming] subunit beta from Coxiella burnetii (strain CbuG_Q212) (Coxiella burnetii (strain Q212)).